The primary structure comprises 215 residues: Probable nicotinate-nucleotide adenylyltransferase (215 aa).

This sequence belongs to the NadD family.

The catalysed reaction is nicotinate beta-D-ribonucleotide + ATP + H(+) = deamido-NAD(+) + diphosphate. The protein operates within cofactor biosynthesis; NAD(+) biosynthesis; deamido-NAD(+) from nicotinate D-ribonucleotide: step 1/1. Catalyzes the reversible adenylation of nicotinate mononucleotide (NaMN) to nicotinic acid adenine dinucleotide (NaAD). The protein is Probable nicotinate-nucleotide adenylyltransferase of Coxiella burnetii (strain RSA 331 / Henzerling II).